A 109-amino-acid chain; its full sequence is Nucleoid-associated protein VP2178 (109 aa).

Disordered regions lie at residues 1–22 (MFGKGGMGNLMKQAQQMQERMQ) and 88–109 (QKEKMASVTGGMQLPPGMKMPF).

The protein belongs to the YbaB/EbfC family. As to quaternary structure, homodimer.

Its subcellular location is the cytoplasm. It is found in the nucleoid. Functionally, binds to DNA and alters its conformation. May be involved in regulation of gene expression, nucleoid organization and DNA protection. The chain is Nucleoid-associated protein VP2178 from Vibrio parahaemolyticus serotype O3:K6 (strain RIMD 2210633).